Here is a 123-residue protein sequence, read N- to C-terminus: Seminal vesicle secretory protein 5 (123 aa).

Positions 1 to 21 (MSPTGFFLLTVLLVLVTEAAS) are cleaved as a signal peptide. The tract at residues 50-123 (GSSSTFGAFS…TKVKTRITRK (74 aa)) is disordered. Residues 64–75 (SRSNFKSKSPSS) show a composition bias toward low complexity. Basic and acidic residues predominate over residues 77–87 (TREKVNEESRS).

Belongs to the SVP2/SVP5/SVP6 family. As to expression, testis.

Its subcellular location is the secreted. It is found in the extracellular space. This Rattus norvegicus (Rat) protein is Seminal vesicle secretory protein 5 (Svs5).